A 437-amino-acid polypeptide reads, in one-letter code: MSTLTPREIVAELNKFVVGQEQAKRMVAVAVRNRWRRQHLPSDLRDEVSPKNIIMMGPTGVGKTEIARRLARLSGAPFIKVEATKFTEVGYVGRDVESMVRDLMEIGINLVRDEENARVRKAAEAAAESRLMDLLLPNSFGQEERASTREKLLQQFRLGFLDEREVEMEVTEQGGGGVDIFAIPGMEQMGGQVKDMFSKAFPPKHSRRKMKIRDAFNVLVQEESGKLVDQDALSQRAKERVEQTGIIFIDEIDKIASSSQNRTSDISREGVQRDLLPIVEGSSVNTKYGMIRTDHILFIAAGAFHFSKPSDMIPELQGRFPLRVELQALGREEFLRILTEPDNALTKQYEALLGTEQIRLSFTMDGLEEIAAFAEDINSRTENIGARRLYTIMEKILADISFDAPDMPGAQIVVNKDYVVEHLQDVRGDQDLTQYIL.

ATP is bound by residues valine 18, glycine 60 to glutamate 65, aspartate 250, glutamate 315, and arginine 387.

The protein belongs to the ClpX chaperone family. HslU subfamily. In terms of assembly, a double ring-shaped homohexamer of HslV is capped on each side by a ring-shaped HslU homohexamer. The assembly of the HslU/HslV complex is dependent on binding of ATP.

It is found in the cytoplasm. Its function is as follows. ATPase subunit of a proteasome-like degradation complex; this subunit has chaperone activity. The binding of ATP and its subsequent hydrolysis by HslU are essential for unfolding of protein substrates subsequently hydrolyzed by HslV. HslU recognizes the N-terminal part of its protein substrates and unfolds these before they are guided to HslV for hydrolysis. In Desulfovibrio desulfuricans (strain ATCC 27774 / DSM 6949 / MB), this protein is ATP-dependent protease ATPase subunit HslU.